A 229-amino-acid chain; its full sequence is Flagellar L-ring protein (229 aa).

Residues methionine 1–alanine 23 form the signal peptide. Residue cysteine 24 is the site of N-palmitoyl cysteine attachment. Cysteine 24 carries the S-diacylglycerol cysteine lipid modification.

The protein belongs to the FlgH family. The basal body constitutes a major portion of the flagellar organelle and consists of four rings (L,P,S, and M) mounted on a central rod.

It is found in the cell outer membrane. Its subcellular location is the bacterial flagellum basal body. Its function is as follows. Assembles around the rod to form the L-ring and probably protects the motor/basal body from shearing forces during rotation. The polypeptide is Flagellar L-ring protein (Anaeromyxobacter sp. (strain K)).